The following is a 138-amino-acid chain: Ribulose bisphosphate carboxylase small subunit (138 aa).

Belongs to the RuBisCO small chain family. Heterohexadecamer of 8 large and 8 small subunits.

It localises to the plastid. The protein resides in the chloroplast. In terms of biological role, ruBisCO catalyzes two reactions: the carboxylation of D-ribulose 1,5-bisphosphate, the primary event in carbon dioxide fixation, as well as the oxidative fragmentation of the pentose substrate in the photorespiration process. Both reactions occur simultaneously and in competition at the same active site. Although the small subunit is not catalytic it is essential for maximal activity. In Pyropia katadae (Red alga), this protein is Ribulose bisphosphate carboxylase small subunit.